A 199-amino-acid polypeptide reads, in one-letter code: Molybdenum cofactor guanylyltransferase (199 aa).

GTP contacts are provided by residues 12–14 (LAG), lysine 25, asparagine 53, aspartate 71, and aspartate 101. Aspartate 101 lines the Mg(2+) pocket.

The protein belongs to the MobA family. Monomer. It depends on Mg(2+) as a cofactor.

The protein resides in the cytoplasm. The enzyme catalyses Mo-molybdopterin + GTP + H(+) = Mo-molybdopterin guanine dinucleotide + diphosphate. Functionally, transfers a GMP moiety from GTP to Mo-molybdopterin (Mo-MPT) cofactor (Moco or molybdenum cofactor) to form Mo-molybdopterin guanine dinucleotide (Mo-MGD) cofactor. The sequence is that of Molybdenum cofactor guanylyltransferase from Polynucleobacter asymbioticus (strain DSM 18221 / CIP 109841 / QLW-P1DMWA-1) (Polynucleobacter necessarius subsp. asymbioticus).